Reading from the N-terminus, the 137-residue chain is Putative pre-16S rRNA nuclease (137 aa).

This sequence belongs to the YqgF nuclease family.

It localises to the cytoplasm. Its function is as follows. Could be a nuclease involved in processing of the 5'-end of pre-16S rRNA. In Anaeromyxobacter dehalogenans (strain 2CP-1 / ATCC BAA-258), this protein is Putative pre-16S rRNA nuclease.